A 157-amino-acid polypeptide reads, in one-letter code: Protein Smg homolog (157 aa).

This sequence belongs to the Smg family.

This chain is Protein Smg homolog, found in Shewanella piezotolerans (strain WP3 / JCM 13877).